The primary structure comprises 752 residues: Protein ORF24 (752 aa).

The protein belongs to the herpesviridae UL87 family. As to quaternary structure, interacts with ORF34.

Plays a role in the expression of late viral mRNAs together with ORF34. The chain is Protein ORF24 (ORF24) from Homo sapiens (Human).